A 300-amino-acid polypeptide reads, in one-letter code: ATP-dependent (S)-NAD(P)H-hydrate dehydratase (300 aa).

Positions 7-289 (IEARLKSIIP…ESIPSVFDQV (283 aa)) constitute a YjeF C-terminal domain. (6S)-NADPHX contacts are provided by residues Gly-107 and 160-166 (NVMEYRR). ATP-binding positions include 194–198 (KGQVD) and 213–222 (GSPRRCGGQG). Position 223 (Asp-223) interacts with (6S)-NADPHX.

This sequence belongs to the NnrD/CARKD family. Requires Mg(2+) as cofactor.

The enzyme catalyses (6S)-NADHX + ATP = ADP + phosphate + NADH + H(+). It catalyses the reaction (6S)-NADPHX + ATP = ADP + phosphate + NADPH + H(+). Functionally, catalyzes the dehydration of the S-form of NAD(P)HX at the expense of ATP, which is converted to ADP. Together with NAD(P)HX epimerase, which catalyzes the epimerization of the S- and R-forms, the enzyme allows the repair of both epimers of NAD(P)HX, a damaged form of NAD(P)H that is a result of enzymatic or heat-dependent hydration. In Entamoeba histolytica (strain ATCC 30459 / HM-1:IMSS / ABRM), this protein is ATP-dependent (S)-NAD(P)H-hydrate dehydratase.